We begin with the raw amino-acid sequence, 445 residues long: Phosphoglucosamine mutase (445 aa).

Catalysis depends on Ser-102, which acts as the Phosphoserine intermediate. Ser-102, Asp-241, Asp-243, and Asp-245 together coordinate Mg(2+). Ser-102 carries the post-translational modification Phosphoserine.

This sequence belongs to the phosphohexose mutase family. Mg(2+) is required as a cofactor. Activated by phosphorylation.

The enzyme catalyses alpha-D-glucosamine 1-phosphate = D-glucosamine 6-phosphate. Functionally, catalyzes the conversion of glucosamine-6-phosphate to glucosamine-1-phosphate. The sequence is that of Phosphoglucosamine mutase from Shigella dysenteriae serotype 1 (strain Sd197).